Reading from the N-terminus, the 311-residue chain is Cell division protein ZipA (311 aa).

The Periplasmic portion of the chain corresponds to 1–6; sequence MENLQL. The chain crosses the membrane as a helical span at residues 7 to 27; sequence VLFVLGAIAIIAVLVHGFWSI. Over 28 to 311 the chain is Cytoplasmic; that stretch reads RKQQPKSLKE…YLQRIRAQLD (284 aa). Positions 46–114 are disordered; sequence DQASVRDSQG…FALSDEPVQR (69 aa). 2 stretches are compositionally biased toward basic and acidic residues: residues 62–83 and 94–103; these read GEVRVRKEVPATDRQEKEDKPV and RDVEDSRHEQ.

The protein belongs to the ZipA family. As to quaternary structure, interacts with FtsZ via their C-terminal domains.

The protein localises to the cell inner membrane. Essential cell division protein that stabilizes the FtsZ protofilaments by cross-linking them and that serves as a cytoplasmic membrane anchor for the Z ring. Also required for the recruitment to the septal ring of downstream cell division proteins. This Shewanella woodyi (strain ATCC 51908 / MS32) protein is Cell division protein ZipA.